The following is a 170-amino-acid chain: uncharacterized protein (170 aa).

Belongs to the mimivirus L223/L227/L812 family.

This is an uncharacterized protein from Acanthamoeba polyphaga mimivirus (APMV).